We begin with the raw amino-acid sequence, 115 residues long: V-type proton ATPase subunit G (115 aa).

Belongs to the V-ATPase G subunit family. V-ATPase is a heteromultimeric enzyme composed of a peripheral catalytic V1 complex (components A to H) attached to an integral membrane V0 proton pore complex (components: a, c, c', c'', d, e, f and VOA1).

It is found in the vacuole membrane. In terms of biological role, subunit of the V1 complex of vacuolar(H+)-ATPase (V-ATPase), a multisubunit enzyme composed of a peripheral complex (V1) that hydrolyzes ATP and a membrane integral complex (V0) that translocates protons. V-ATPase is responsible for acidifying and maintaining the pH of intracellular compartments. This is V-type proton ATPase subunit G (vma-10) from Neurospora crassa (strain ATCC 24698 / 74-OR23-1A / CBS 708.71 / DSM 1257 / FGSC 987).